Consider the following 114-residue polypeptide: Hydrogenase maturation factor HypA (114 aa).

His-2 is a Ni(2+) binding site. The Zn(2+) site is built by Cys-73, Cys-76, Cys-89, and Cys-92.

This sequence belongs to the HypA/HybF family.

Involved in the maturation of [NiFe] hydrogenases. Required for nickel insertion into the metal center of the hydrogenase. This is Hydrogenase maturation factor HypA from Syntrophus aciditrophicus (strain SB).